A 439-amino-acid polypeptide reads, in one-letter code: Xaa-Pro dipeptidase (439 aa).

The Mn(2+) site is built by Asp244, Asp255, His335, Glu380, and Glu419.

The protein belongs to the peptidase M24B family. Bacterial-type prolidase subfamily. Mn(2+) is required as a cofactor.

The enzyme catalyses Xaa-L-Pro dipeptide + H2O = an L-alpha-amino acid + L-proline. Splits dipeptides with a prolyl residue in the C-terminal position. This Shewanella oneidensis (strain ATCC 700550 / JCM 31522 / CIP 106686 / LMG 19005 / NCIMB 14063 / MR-1) protein is Xaa-Pro dipeptidase.